The primary structure comprises 159 residues: Ribosomal RNA large subunit methyltransferase H (159 aa).

S-adenosyl-L-methionine contacts are provided by residues Ile-75, Gly-108, and 127 to 132; that span reads FGRMTL.

Belongs to the RNA methyltransferase RlmH family. In terms of assembly, homodimer.

It localises to the cytoplasm. The enzyme catalyses pseudouridine(1915) in 23S rRNA + S-adenosyl-L-methionine = N(3)-methylpseudouridine(1915) in 23S rRNA + S-adenosyl-L-homocysteine + H(+). Its function is as follows. Specifically methylates the pseudouridine at position 1915 (m3Psi1915) in 23S rRNA. This chain is Ribosomal RNA large subunit methyltransferase H, found in Lactococcus lactis subsp. lactis (strain IL1403) (Streptococcus lactis).